The chain runs to 207 residues: Thymidine kinase (207 aa).

ATP-binding positions include 15–22 and 88–91; these read GCMFSGKS and DEIQ. Glutamate 89 (proton acceptor) is an active-site residue. Zn(2+) contacts are provided by cysteine 145, cysteine 148, cysteine 183, and histidine 186. The segment covering 184-198 has biased composition (basic residues); sequence RHHHEVPGKPKKRYN. The tract at residues 184 to 207 is disordered; sequence RHHHEVPGKPKKRYNHPLAGHTGE.

This sequence belongs to the thymidine kinase family. Homotetramer.

The protein resides in the cytoplasm. It catalyses the reaction thymidine + ATP = dTMP + ADP + H(+). The protein is Thymidine kinase of Geobacillus kaustophilus (strain HTA426).